Reading from the N-terminus, the 298-residue chain is Protoheme IX farnesyltransferase (298 aa).

9 helical membrane passes run 19-39, 40-60, 91-111, 112-132, 140-160, 167-187, 213-233, 236-256, and 277-297; these read VMSLVVFTAFVGLWIAPQPVN, PFVAFCAVLFIALGGGASGAL, LAVGIALSGLSVMMLGAGGNW, FAAGFLAFTIFFYAVVYTIWL, IVIGGAAGAFPPMIGWALPTG, LLMFALIFFWTPPHFWALALF, IFAYTLVLAPFALWLGFTSVG, LYLAVSVVLNALFIAGGWQIL, and LSLYYTFLHFLALLVQHWVGG.

The protein belongs to the UbiA prenyltransferase family. Protoheme IX farnesyltransferase subfamily. In terms of assembly, interacts with CtaA.

The protein localises to the cell inner membrane. It carries out the reaction heme b + (2E,6E)-farnesyl diphosphate + H2O = Fe(II)-heme o + diphosphate. It participates in porphyrin-containing compound metabolism; heme O biosynthesis; heme O from protoheme: step 1/1. In terms of biological role, converts heme B (protoheme IX) to heme O by substitution of the vinyl group on carbon 2 of heme B porphyrin ring with a hydroxyethyl farnesyl side group. In Paracoccus denitrificans, this protein is Protoheme IX farnesyltransferase.